The chain runs to 434 residues: Methylenetetrahydrofolate--tRNA-(uracil-5-)-methyltransferase TrmFO (434 aa).

Residue 9-14 (GAGLAG) coordinates FAD.

The protein belongs to the MnmG family. TrmFO subfamily. It depends on FAD as a cofactor.

The protein localises to the cytoplasm. The catalysed reaction is uridine(54) in tRNA + (6R)-5,10-methylene-5,6,7,8-tetrahydrofolate + NADH + H(+) = 5-methyluridine(54) in tRNA + (6S)-5,6,7,8-tetrahydrofolate + NAD(+). It catalyses the reaction uridine(54) in tRNA + (6R)-5,10-methylene-5,6,7,8-tetrahydrofolate + NADPH + H(+) = 5-methyluridine(54) in tRNA + (6S)-5,6,7,8-tetrahydrofolate + NADP(+). Its function is as follows. Catalyzes the folate-dependent formation of 5-methyl-uridine at position 54 (M-5-U54) in all tRNAs. This is Methylenetetrahydrofolate--tRNA-(uracil-5-)-methyltransferase TrmFO from Fusobacterium nucleatum subsp. nucleatum (strain ATCC 25586 / DSM 15643 / BCRC 10681 / CIP 101130 / JCM 8532 / KCTC 2640 / LMG 13131 / VPI 4355).